The sequence spans 423 residues: Serine hydroxymethyltransferase (423 aa).

(6S)-5,6,7,8-tetrahydrofolate contacts are provided by residues Leu-118 and 122 to 124 (GHL). At Lys-227 the chain carries N6-(pyridoxal phosphate)lysine. 351-353 (SPF) provides a ligand contact to (6S)-5,6,7,8-tetrahydrofolate.

Belongs to the SHMT family. Homodimer. Pyridoxal 5'-phosphate serves as cofactor.

It is found in the cytoplasm. It catalyses the reaction (6R)-5,10-methylene-5,6,7,8-tetrahydrofolate + glycine + H2O = (6S)-5,6,7,8-tetrahydrofolate + L-serine. It functions in the pathway one-carbon metabolism; tetrahydrofolate interconversion. It participates in amino-acid biosynthesis; glycine biosynthesis; glycine from L-serine: step 1/1. Catalyzes the reversible interconversion of serine and glycine with tetrahydrofolate (THF) serving as the one-carbon carrier. This reaction serves as the major source of one-carbon groups required for the biosynthesis of purines, thymidylate, methionine, and other important biomolecules. Also exhibits THF-independent aldolase activity toward beta-hydroxyamino acids, producing glycine and aldehydes, via a retro-aldol mechanism. This is Serine hydroxymethyltransferase from Petrotoga mobilis (strain DSM 10674 / SJ95).